Consider the following 405-residue polypeptide: MQYTEVMVRYGELSTKGKNRKDFIGRLAGNVTRALQDFPEIEIHPKHDRMHIVLNGAPFETIDQRLKLVFGIQTYSPTIKVDKNLDAIKKASLELMQATFKDGMTFKVNTRRSDHDFEYDTNQLNMMIGDYLFDNMDNLKVQMKKPDLVLRIEVRQDAIYISNQLLHGAGGMPVGTAGKAVMMLSGGIDSPVASYLAMKRGVEIDMVHFFSPPYTTEKALAKAKELTGILANYSGKINFIAVPFTEIQEQIKEKLPEGYLMTIQRRFMLQLADRIRAMRGGLAIFNGESVGQVASQTLESMVAINDVTSTPVLRPVATMDKTEIIKLAEQIGTFDLSIEPFEDCCTIFAPPRPKTKPKLDEARKLEDRLDAEGMIQRAIDGMEITPIYPNQKFLDDKAQEDADLL.

In terms of domain architecture, THUMP spans Glu60 to Leu165. Residues Met183–Leu184, His208–Phe209, Arg265, Gly287, and Gln296 each bind ATP.

This sequence belongs to the ThiI family.

It is found in the cytoplasm. The enzyme catalyses [ThiI sulfur-carrier protein]-S-sulfanyl-L-cysteine + a uridine in tRNA + 2 reduced [2Fe-2S]-[ferredoxin] + ATP + H(+) = [ThiI sulfur-carrier protein]-L-cysteine + a 4-thiouridine in tRNA + 2 oxidized [2Fe-2S]-[ferredoxin] + AMP + diphosphate. It catalyses the reaction [ThiS sulfur-carrier protein]-C-terminal Gly-Gly-AMP + S-sulfanyl-L-cysteinyl-[cysteine desulfurase] + AH2 = [ThiS sulfur-carrier protein]-C-terminal-Gly-aminoethanethioate + L-cysteinyl-[cysteine desulfurase] + A + AMP + 2 H(+). It participates in cofactor biosynthesis; thiamine diphosphate biosynthesis. Its function is as follows. Catalyzes the ATP-dependent transfer of a sulfur to tRNA to produce 4-thiouridine in position 8 of tRNAs, which functions as a near-UV photosensor. Also catalyzes the transfer of sulfur to the sulfur carrier protein ThiS, forming ThiS-thiocarboxylate. This is a step in the synthesis of thiazole, in the thiamine biosynthesis pathway. The sulfur is donated as persulfide by IscS. This chain is Probable tRNA sulfurtransferase, found in Lactobacillus johnsonii (strain CNCM I-12250 / La1 / NCC 533).